A 329-amino-acid polypeptide reads, in one-letter code: tRNA dimethylallyltransferase (329 aa).

An ATP-binding site is contributed by glycine 24–threonine 31. Threonine 26–threonine 31 serves as a coordination point for substrate. The tract at residues aspartate 49 to glutamine 52 is interaction with substrate tRNA.

It belongs to the IPP transferase family. Monomer. It depends on Mg(2+) as a cofactor.

It catalyses the reaction adenosine(37) in tRNA + dimethylallyl diphosphate = N(6)-dimethylallyladenosine(37) in tRNA + diphosphate. Catalyzes the transfer of a dimethylallyl group onto the adenine at position 37 in tRNAs that read codons beginning with uridine, leading to the formation of N6-(dimethylallyl)adenosine (i(6)A). This Methylacidiphilum infernorum (isolate V4) (Methylokorus infernorum (strain V4)) protein is tRNA dimethylallyltransferase.